The primary structure comprises 265 residues: Protein B8 (265 aa).

The sequence is that of Protein B8 (B8) from Homo sapiens (Human).